Reading from the N-terminus, the 311-residue chain is tRNA-cytidine(32) 2-sulfurtransferase (311 aa).

Positions 47 to 52 (SGGKDS) match the PP-loop motif motif. Positions 122, 125, and 213 each coordinate [4Fe-4S] cluster.

The protein belongs to the TtcA family. As to quaternary structure, homodimer. It depends on Mg(2+) as a cofactor. Requires [4Fe-4S] cluster as cofactor.

The protein localises to the cytoplasm. The enzyme catalyses cytidine(32) in tRNA + S-sulfanyl-L-cysteinyl-[cysteine desulfurase] + AH2 + ATP = 2-thiocytidine(32) in tRNA + L-cysteinyl-[cysteine desulfurase] + A + AMP + diphosphate + H(+). The protein operates within tRNA modification. In terms of biological role, catalyzes the ATP-dependent 2-thiolation of cytidine in position 32 of tRNA, to form 2-thiocytidine (s(2)C32). The sulfur atoms are provided by the cysteine/cysteine desulfurase (IscS) system. The sequence is that of tRNA-cytidine(32) 2-sulfurtransferase from Escherichia coli O7:K1 (strain IAI39 / ExPEC).